Reading from the N-terminus, the 206-residue chain is Ribosomal RNA large subunit methyltransferase E (206 aa).

Positions 63, 65, 83, 99, and 124 each coordinate S-adenosyl-L-methionine. The active-site Proton acceptor is lysine 164.

It belongs to the class I-like SAM-binding methyltransferase superfamily. RNA methyltransferase RlmE family.

It is found in the cytoplasm. The catalysed reaction is uridine(2552) in 23S rRNA + S-adenosyl-L-methionine = 2'-O-methyluridine(2552) in 23S rRNA + S-adenosyl-L-homocysteine + H(+). In terms of biological role, specifically methylates the uridine in position 2552 of 23S rRNA at the 2'-O position of the ribose in the fully assembled 50S ribosomal subunit. The protein is Ribosomal RNA large subunit methyltransferase E of Buchnera aphidicola subsp. Schizaphis graminum (strain Sg).